The following is a 137-amino-acid chain: Small ribosomal subunit protein uS9 (137 aa).

The segment covering 105 to 117 (LKVEGYLTRDPRA) has biased composition (basic and acidic residues). The disordered stretch occupies residues 105–137 (LKVEGYLTRDPRAKERKKYGLRKARKAPQYSKR). Over residues 118-137 (KERKKYGLRKARKAPQYSKR) the composition is skewed to basic residues.

It belongs to the universal ribosomal protein uS9 family.

The sequence is that of Small ribosomal subunit protein uS9 from Cyanothece sp. (strain PCC 7425 / ATCC 29141).